We begin with the raw amino-acid sequence, 606 residues long: Kelch-like protein 26 (606 aa).

The segment covering 1–19 (MAESGGSSGSSQSPERPSS) has biased composition (low complexity). The disordered stretch occupies residues 1–20 (MAESGGSSGSSQSPERPSSL). At alanine 2 the chain carries N-acetylalanine. Residues 54–121 (LDVVLTVNSE…AYSAEVTLDL (68 aa)) enclose the BTB domain. The 102-residue stretch at 156-257 (CLHIGQMATT…QPAELVDSVQ (102 aa)) folds into the BACK domain. Kelch repeat units follow at residues 301–352 (SLVA…VLDN), 353–404 (FVYV…ALGG), 406–451 (LYAT…AAAG), 452–499 (RLYI…GAAG), 501–550 (IYAL…LLER), and 552–599 (IYIV…AVLL). Serine 430 is modified (phosphoserine).

May play a role in endo(sarco)plasmic reticulum (ER/SR) mitochondrial signaling. May be part of the ubiquitin-proteasome system (UPS) and affect ubiquitination and degradation of target substrates in cardiomyocytes. The chain is Kelch-like protein 26 (Klhl26) from Mus musculus (Mouse).